The primary structure comprises 401 residues: Formate-dependent phosphoribosylglycinamide formyltransferase (401 aa).

N(1)-(5-phospho-beta-D-ribosyl)glycinamide-binding positions include 27 to 28 and Glu87; that span reads EL. Residues Arg119, Lys160, 165-170, 200-203, and Glu208 contribute to the ATP site; these read SSGKGQ and EELV. In terms of domain architecture, ATP-grasp spans 124-313; it reads EFAAEEVGVT…QFDLHLRAIL (190 aa). 2 residues coordinate Mg(2+): Glu272 and Glu284. N(1)-(5-phospho-beta-D-ribosyl)glycinamide-binding positions include Asp291, Lys361, and 368 to 369; that span reads RR.

This sequence belongs to the PurK/PurT family. In terms of assembly, homodimer.

It catalyses the reaction N(1)-(5-phospho-beta-D-ribosyl)glycinamide + formate + ATP = N(2)-formyl-N(1)-(5-phospho-beta-D-ribosyl)glycinamide + ADP + phosphate + H(+). It functions in the pathway purine metabolism; IMP biosynthesis via de novo pathway; N(2)-formyl-N(1)-(5-phospho-D-ribosyl)glycinamide from N(1)-(5-phospho-D-ribosyl)glycinamide (formate route): step 1/1. Its function is as follows. Involved in the de novo purine biosynthesis. Catalyzes the transfer of formate to 5-phospho-ribosyl-glycinamide (GAR), producing 5-phospho-ribosyl-N-formylglycinamide (FGAR). Formate is provided by PurU via hydrolysis of 10-formyl-tetrahydrofolate. The chain is Formate-dependent phosphoribosylglycinamide formyltransferase from Haloquadratum walsbyi (strain DSM 16790 / HBSQ001).